Consider the following 312-residue polypeptide: tRNA uridine(34) hydroxylase (312 aa).

In terms of domain architecture, Rhodanese spans 123 to 217; that stretch reads SDPEVLLIDT…YLEEVPQEQS (95 aa). C177 serves as the catalytic Cysteine persulfide intermediate. Positions 282 to 293 are enriched in basic and acidic residues; it reads ARERQKQIELAR. Residues 282-312 are disordered; sequence ARERQKQIELARQRNQPHPLGRDPRQSTLEN.

The protein belongs to the TrhO family.

The enzyme catalyses uridine(34) in tRNA + AH2 + O2 = 5-hydroxyuridine(34) in tRNA + A + H2O. Its function is as follows. Catalyzes oxygen-dependent 5-hydroxyuridine (ho5U) modification at position 34 in tRNAs. The protein is tRNA uridine(34) hydroxylase of Pseudomonas paraeruginosa (strain DSM 24068 / PA7) (Pseudomonas aeruginosa (strain PA7)).